The sequence spans 487 residues: Betaine aldehyde dehydrogenase (487 aa).

2 residues coordinate K(+): Ile27 and Asp93. Position 149 to 151 (Gly149 to Trp151) interacts with NAD(+). Lys161 functions as the Charge relay system in the catalytic mechanism. NAD(+) is bound by residues Lys175–Glu178 and Ser228–Thr231. Leu243 contacts K(+). Catalysis depends on Glu249, which acts as the Proton acceptor. Residues Gly251, Cys283, and Glu384 each contribute to the NAD(+) site. Cys283 serves as the catalytic Nucleophile. Cys283 is modified (cysteine sulfenic acid (-SOH)). Residues Lys454 and Gly457 each coordinate K(+). Glu461 acts as the Charge relay system in catalysis.

Belongs to the aldehyde dehydrogenase family. Dimer of dimers. Requires K(+) as cofactor.

The catalysed reaction is betaine aldehyde + NAD(+) + H2O = glycine betaine + NADH + 2 H(+). Its pathway is amine and polyamine biosynthesis; betaine biosynthesis via choline pathway; betaine from betaine aldehyde: step 1/1. Its function is as follows. Involved in the biosynthesis of the osmoprotectant glycine betaine. Catalyzes the irreversible oxidation of betaine aldehyde to the corresponding acid. The sequence is that of Betaine aldehyde dehydrogenase from Brucella anthropi (strain ATCC 49188 / DSM 6882 / CCUG 24695 / JCM 21032 / LMG 3331 / NBRC 15819 / NCTC 12168 / Alc 37) (Ochrobactrum anthropi).